A 56-amino-acid polypeptide reads, in one-letter code: UPF0391 membrane protein Jann_3570 (56 aa).

A run of 2 helical transmembrane segments spans residues 4-24 (WAVTFLIIALIAALFGFGGIA) and 29-48 (GIAQILFFVFIALFAISLVA).

It belongs to the UPF0391 family.

It is found in the cell membrane. The polypeptide is UPF0391 membrane protein Jann_3570 (Jannaschia sp. (strain CCS1)).